Here is a 169-residue protein sequence, read N- to C-terminus: Nucleoside diphosphate kinase 3-A (169 aa).

6 residues coordinate ADP: K29, R105, T111, R122, V129, and N132. The active-site Pros-phosphohistidine intermediate is the H135.

Belongs to the NDK family. In terms of assembly, homohexamer. It depends on Mg(2+) as a cofactor.

The protein localises to the mitochondrion outer membrane. It localises to the cytoplasm. It is found in the cytoskeleton. Its subcellular location is the cilium basal body. The catalysed reaction is a 2'-deoxyribonucleoside 5'-diphosphate + ATP = a 2'-deoxyribonucleoside 5'-triphosphate + ADP. It carries out the reaction a ribonucleoside 5'-diphosphate + ATP = a ribonucleoside 5'-triphosphate + ADP. Its function is as follows. Catalyzes the phosphorylation of ribonucleosides and deoxyribonucleoside diphosphates, other than ATP, into the corresponding triphosphates with ATP as the major phosphate donor. The ATP gamma phosphate is transferred to the nucleoside diphosphate beta phosphate via a ping-pong mechanism, using a phosphorylated active-site intermediate. Through the catalyzed exchange of gamma-phosphate between di- and triphosphonucleosides participates in regulation of intracellular nucleotide homeostasis. Required for ciliary function during renal development. Independently of its kinase activity, facilitates mitochondrial tethering prior to membrane fusion through its direct membrane-binding and hexamerization. Implicated in repair of both single- and double-stranded breaks in DNA, independently of its kinase activity. In Xenopus laevis (African clawed frog), this protein is Nucleoside diphosphate kinase 3-A.